A 391-amino-acid polypeptide reads, in one-letter code: Alkanesulfonate monooxygenase (391 aa).

This sequence belongs to the SsuD family.

It carries out the reaction an alkanesulfonate + FMNH2 + O2 = an aldehyde + FMN + sulfite + H2O + 2 H(+). Functionally, catalyzes the desulfonation of aliphatic sulfonates. The protein is Alkanesulfonate monooxygenase of Rhodopseudomonas palustris (strain ATCC BAA-98 / CGA009).